A 335-amino-acid polypeptide reads, in one-letter code: UPF0353 protein Mflv_3659 (335 aa).

A run of 2 helical transmembrane segments spans residues 18–38 and 67–87; these read WFFL…VVQL and LPAV…AGPT. A VWFA domain is found at 98 to 294; the sequence is VVMLVIDVSQ…EQLKQVFTNL (197 aa). The chain crosses the membrane as a helical span at residues 309 to 329; the sequence is VGWLRLGAGVLALAALGALLI.

The protein belongs to the UPF0353 family.

The protein resides in the cell membrane. This chain is UPF0353 protein Mflv_3659, found in Mycolicibacterium gilvum (strain PYR-GCK) (Mycobacterium gilvum (strain PYR-GCK)).